The following is a 263-amino-acid chain: Thiazole synthase (263 aa).

The active-site Schiff-base intermediate with DXP is the Lys-102. 1-deoxy-D-xylulose 5-phosphate contacts are provided by residues Gly-164, 190–191 (AG), and 212–213 (NT).

The protein belongs to the ThiG family. Homotetramer. Forms heterodimers with either ThiH or ThiS.

It localises to the cytoplasm. It carries out the reaction [ThiS sulfur-carrier protein]-C-terminal-Gly-aminoethanethioate + 2-iminoacetate + 1-deoxy-D-xylulose 5-phosphate = [ThiS sulfur-carrier protein]-C-terminal Gly-Gly + 2-[(2R,5Z)-2-carboxy-4-methylthiazol-5(2H)-ylidene]ethyl phosphate + 2 H2O + H(+). The protein operates within cofactor biosynthesis; thiamine diphosphate biosynthesis. Functionally, catalyzes the rearrangement of 1-deoxy-D-xylulose 5-phosphate (DXP) to produce the thiazole phosphate moiety of thiamine. Sulfur is provided by the thiocarboxylate moiety of the carrier protein ThiS. In vitro, sulfur can be provided by H(2)S. This is Thiazole synthase from Helicobacter hepaticus (strain ATCC 51449 / 3B1).